A 429-amino-acid chain; its full sequence is BURP domain-containing protein 3 (429 aa).

Positions Met-1–Ala-21 are cleaved as a signal peptide. The interval Gly-59–Gly-81 is disordered. One can recognise a BURP domain in the interval Phe-213–Ser-428.

Expressed in stems, leaves, shoot, panicles and stamen.

The chain is BURP domain-containing protein 3 (BURP3) from Oryza sativa subsp. japonica (Rice).